The chain runs to 64 residues: Disintegrin VB7B (64 aa).

The Disintegrin domain maps to 1–64 (ELLQNSGNPC…TGISSDCPRN (64 aa)). Disulfide bonds link Cys-10/Cys-33, Cys-24/Cys-30, Cys-29/Cys-54, and Cys-42/Cys-61. Positions 46 to 48 (KGD) match the Cell attachment site; atypical (KGD) motif.

The protein belongs to the venom metalloproteinase (M12B) family. P-II subfamily. P-IIe sub-subfamily. In terms of assembly, heterodimer with VB7A; disulfide-linked. In terms of tissue distribution, expressed by the venom gland.

The protein resides in the secreted. Its function is as follows. Poor inhibitor of platelet aggregation. The disintegrin inhibits the adhesion of cells expressing the RGD-dependent integrin alpha-5/beta-1 (ITGA5/ITGB1) to immobilized fibronectin. Inhibition on alpha-IIb/beta-3 (ITGA2B/ITGB3) is low. In Vipera berus berus (Common viper), this protein is Disintegrin VB7B.